The primary structure comprises 119 residues: Ribonuclease P protein component (119 aa).

Belongs to the RnpA family. Consists of a catalytic RNA component (M1 or rnpB) and a protein subunit.

The enzyme catalyses Endonucleolytic cleavage of RNA, removing 5'-extranucleotides from tRNA precursor.. Its function is as follows. RNaseP catalyzes the removal of the 5'-leader sequence from pre-tRNA to produce the mature 5'-terminus. It can also cleave other RNA substrates such as 4.5S RNA. The protein component plays an auxiliary but essential role in vivo by binding to the 5'-leader sequence and broadening the substrate specificity of the ribozyme. This is Ribonuclease P protein component from Erwinia tasmaniensis (strain DSM 17950 / CFBP 7177 / CIP 109463 / NCPPB 4357 / Et1/99).